Here is a 568-residue protein sequence, read N- to C-terminus: Urease subunit alpha (568 aa).

The region spanning 130–568 (GGIDTHIHFI…LPMAQRYFLF (439 aa)) is the Urease domain. 3 residues coordinate Ni(2+): His-135, His-137, and Lys-218. Lys-218 carries the post-translational modification N6-carboxylysine. His-220 is a binding site for substrate. The Ni(2+) site is built by His-247 and His-273. The active-site Proton donor is the His-321. Asp-361 contributes to the Ni(2+) binding site.

This sequence belongs to the metallo-dependent hydrolases superfamily. Urease alpha subunit family. In terms of assembly, heterotrimer of UreA (gamma), UreB (beta) and UreC (alpha) subunits. Three heterotrimers associate to form the active enzyme. The cofactor is Ni cation. Post-translationally, carboxylation allows a single lysine to coordinate two nickel ions.

Its subcellular location is the cytoplasm. The enzyme catalyses urea + 2 H2O + H(+) = hydrogencarbonate + 2 NH4(+). It participates in nitrogen metabolism; urea degradation; CO(2) and NH(3) from urea (urease route): step 1/1. The polypeptide is Urease subunit alpha (Burkholderia vietnamiensis (strain G4 / LMG 22486) (Burkholderia cepacia (strain R1808))).